Reading from the N-terminus, the 397-residue chain is Iron-sulfur cluster assembly SufBD family protein Rv1462 (397 aa).

Threonine 2 is subject to N-acetylthreonine.

Belongs to the iron-sulfur cluster assembly SufBD family.

In Mycobacterium tuberculosis (strain ATCC 25618 / H37Rv), this protein is Iron-sulfur cluster assembly SufBD family protein Rv1462.